Reading from the N-terminus, the 338-residue chain is GTPase Obg (338 aa).

The Obg domain occupies 1-159; sequence MQFIDQAEIE…RRIRLELKLL (159 aa). Positions 160 to 328 constitute an OBG-type G domain; it reads AEVGIIGLPN…MLQATWEQLD (169 aa). Residues 166–173, 191–195, 213–216, 280–283, and 309–311 each bind GTP; these read GLPNAGKS, FTTLI, DIPG, NKLD, and SAV. Positions 173 and 193 each coordinate Mg(2+).

The protein belongs to the TRAFAC class OBG-HflX-like GTPase superfamily. OBG GTPase family. As to quaternary structure, monomer. Requires Mg(2+) as cofactor.

It is found in the cytoplasm. In terms of biological role, an essential GTPase which binds GTP, GDP and possibly (p)ppGpp with moderate affinity, with high nucleotide exchange rates and a fairly low GTP hydrolysis rate. Plays a role in control of the cell cycle, stress response, ribosome biogenesis and in those bacteria that undergo differentiation, in morphogenesis control. The protein is GTPase Obg of Gloeothece citriformis (strain PCC 7424) (Cyanothece sp. (strain PCC 7424)).